We begin with the raw amino-acid sequence, 523 residues long: Putative L-type lectin-domain containing receptor kinase V.6 (523 aa).

Positions 1–27 (MFSEVKVLQIVLVQWLTLFSFTYNSHG) are cleaved as a signal peptide. A legume-lectin like region spans residues 28–242 (TYILDGSAVF…TGSIRALHYM (215 aa)). The Extracellular segment spans residues 28 to 279 (TYILDGSAVF…KPSDRLRTVL (252 aa)). N47, N59, N112, and N171 each carry an N-linked (GlcNAc...) asparagine glycan. A helical transmembrane segment spans residues 280–300 (AVCLTLALFAVFLASGIGFVF). Residues 301–523 (YLRHKKVKEV…TGRAVRVKFF (223 aa)) are Cytoplasmic-facing. Residues 335–523 (FKEKQLLGKG…TGRAVRVKFF (189 aa)) enclose the Protein kinase domain. Residues 341–349 (LGKGGFGQV) and K364 contribute to the ATP site. D464 functions as the Proton acceptor in the catalytic mechanism.

In the C-terminal section; belongs to the protein kinase superfamily. Ser/Thr protein kinase family. This sequence in the N-terminal section; belongs to the leguminous lectin family.

Its subcellular location is the cell membrane. It carries out the reaction L-seryl-[protein] + ATP = O-phospho-L-seryl-[protein] + ADP + H(+). The catalysed reaction is L-threonyl-[protein] + ATP = O-phospho-L-threonyl-[protein] + ADP + H(+). The chain is Putative L-type lectin-domain containing receptor kinase V.6 (LECRK56) from Arabidopsis thaliana (Mouse-ear cress).